Here is a 454-residue protein sequence, read N- to C-terminus: DNA-binding protein (454 aa).

The disordered stretch occupies residues 1 to 41; that stretch reads MSHKKVVAISESSSDEEVPVAPPTAPPKKRQRKAVEEPRGH. Residue Tyr129 is modified to Phosphotyrosine; by host. Zn(2+) is bound by residues Cys213 and His215. The tract at residues 226 to 260 is flexible loop; the sequence is VEMDVNSENAQRALKENPEKTKIVSNRWGRNVVQF. Residues Cys268, Cys284, Cys325, Cys327, Cys378, and Cys394 each coordinate Zn(2+). The C-terminal arm, DBP binding stretch occupies residues 440-454; the sequence is TILPQGQHDDDLVLF.

The protein belongs to the adenoviridae E2A DNA-binding protein family. Homomultimerizes on viral ssDNA bound to pTP. Forms a initiation complex with viral polymerase, pTP and hosts NFIA and POU2F1/OCT1. Interacts with host SRCAP.

The protein localises to the host nucleus. Its function is as follows. Plays a role in the elongation phase of viral strand displacement replication by unwinding the template in an ATP-independent fashion, employing its capacity to form multimers. Also enhances the rate of initiation. Released from template upon second strand synthesis. Assembles in complex with viral pTP, viral pol, host NFIA and host POU2F1/OCT1 on viral origin of replication. Covers the whole ssDNA genome during synthesis. The complementary strand synthesis induces its relese from DNA template. May inhibit cellular transcription mediated by the interaction between host SRCAP and CBP. The sequence is that of DNA-binding protein from Canine adenovirus serotype 1 (strain CLL) (CAdV-1).